The following is a 406-amino-acid chain: Probable cysteine desulfurase (406 aa).

Residue lysine 224 is modified to N6-(pyridoxal phosphate)lysine. Residue cysteine 361 is the Cysteine persulfide intermediate of the active site.

The protein belongs to the class-V pyridoxal-phosphate-dependent aminotransferase family. Csd subfamily. Pyridoxal 5'-phosphate serves as cofactor.

The catalysed reaction is (sulfur carrier)-H + L-cysteine = (sulfur carrier)-SH + L-alanine. Catalyzes the removal of elemental sulfur and selenium atoms from L-cysteine, L-cystine, L-selenocysteine, and L-selenocystine to produce L-alanine. This chain is Probable cysteine desulfurase (csd), found in Halalkalibacterium halodurans (strain ATCC BAA-125 / DSM 18197 / FERM 7344 / JCM 9153 / C-125) (Bacillus halodurans).